Reading from the N-terminus, the 425-residue chain is Tyrosine--tRNA ligase (425 aa).

Y37 lines the L-tyrosine pocket. A 'HIGH' region motif is present at residues 42–51 (PTADSLHLGH). 2 residues coordinate L-tyrosine: Y175 and Q179. A 'KMSKS' region motif is present at residues 235-239 (KFGKT). Residue K238 participates in ATP binding. The S4 RNA-binding domain occupies 357–415 (QDLQQALVNAELAPSRGQARKLIEAKSVSINGSLQTDAEYTFGEDDRLFGQYTLLRRGK).

The protein belongs to the class-I aminoacyl-tRNA synthetase family. TyrS type 1 subfamily. As to quaternary structure, homodimer.

It is found in the cytoplasm. The enzyme catalyses tRNA(Tyr) + L-tyrosine + ATP = L-tyrosyl-tRNA(Tyr) + AMP + diphosphate + H(+). In terms of biological role, catalyzes the attachment of tyrosine to tRNA(Tyr) in a two-step reaction: tyrosine is first activated by ATP to form Tyr-AMP and then transferred to the acceptor end of tRNA(Tyr). This chain is Tyrosine--tRNA ligase, found in Erwinia tasmaniensis (strain DSM 17950 / CFBP 7177 / CIP 109463 / NCPPB 4357 / Et1/99).